Reading from the N-terminus, the 114-residue chain is Ig heavy chain V region GOM (114 aa).

Positions 1–112 constitute an Ig-like domain; it reads EVQLVESGGD…YWGQGTLVTV (112 aa).

In Canis lupus familiaris (Dog), this protein is Ig heavy chain V region GOM.